The chain runs to 423 residues: Histidine--tRNA ligase (423 aa).

This sequence belongs to the class-II aminoacyl-tRNA synthetase family. Homodimer.

It localises to the cytoplasm. The catalysed reaction is tRNA(His) + L-histidine + ATP = L-histidyl-tRNA(His) + AMP + diphosphate + H(+). The polypeptide is Histidine--tRNA ligase (Staphylococcus haemolyticus (strain JCSC1435)).